Consider the following 208-residue polypeptide: MIERTFIKENVMETLVDEYLKNKLPRAGYSHMDVKKTPIGTRITVFAEKPGFVIGRKGKMVKELTETIATKYGVNKPQIEVKQIESPDLDAGVVAQKIASSLERGMHFRRVAHSAIRRVMAQGAKGVVVIVSGKLTGERSRTEKYMEGYMKHCGEPSEELVDQCHKIAKLKLGVVGVTVKIMPPEITLPDEIVIKDVPSKTTVETVEE.

One can recognise a KH type-2 domain in the interval 16–85 (VDEYLKNKLP…KPQIEVKQIE (70 aa)).

It belongs to the universal ribosomal protein uS3 family. As to quaternary structure, part of the 30S ribosomal subunit.

In terms of biological role, binds the lower part of the 30S subunit head. The polypeptide is Small ribosomal subunit protein uS3 (Methanococcus aeolicus (strain ATCC BAA-1280 / DSM 17508 / OCM 812 / Nankai-3)).